A 115-amino-acid polypeptide reads, in one-letter code: uncharacterized protein (115 aa).

The next 3 helical transmembrane spans lie at 23–43 (LVYA…LFFA), 63–83 (AMVT…VVMV), and 90–110 (NVVI…YVAA).

The protein localises to the cell membrane. This is an uncharacterized protein from Mycobacterium bovis (strain ATCC BAA-935 / AF2122/97).